A 685-amino-acid polypeptide reads, in one-letter code: DNA ligase (685 aa).

NAD(+) contacts are provided by residues 47-51 (DSEYD), 96-97 (SL), and E125. The N6-AMP-lysine intermediate role is filled by K127. Positions 148, 185, 304, and 328 each coordinate NAD(+). C422, C425, C440, and C446 together coordinate Zn(2+). In terms of domain architecture, BRCT spans 605–685 (ADAQPLKGQT…ELLALLAANA (81 aa)).

The protein belongs to the NAD-dependent DNA ligase family. LigA subfamily. It depends on Mg(2+) as a cofactor. The cofactor is Mn(2+).

The catalysed reaction is NAD(+) + (deoxyribonucleotide)n-3'-hydroxyl + 5'-phospho-(deoxyribonucleotide)m = (deoxyribonucleotide)n+m + AMP + beta-nicotinamide D-nucleotide.. DNA ligase that catalyzes the formation of phosphodiester linkages between 5'-phosphoryl and 3'-hydroxyl groups in double-stranded DNA using NAD as a coenzyme and as the energy source for the reaction. It is essential for DNA replication and repair of damaged DNA. The polypeptide is DNA ligase (Shewanella baltica (strain OS195)).